The following is a 182-amino-acid chain: Large ribosomal subunit protein uL22 (182 aa).

The tract at residues 159 to 182 is disordered; that stretch reads AAAKPKATAKKATGEKSKAKTKAN.

It belongs to the universal ribosomal protein uL22 family. As to quaternary structure, part of the 50S ribosomal subunit.

In terms of biological role, this protein binds specifically to 23S rRNA; its binding is stimulated by other ribosomal proteins, e.g. L4, L17, and L20. It is important during the early stages of 50S assembly. It makes multiple contacts with different domains of the 23S rRNA in the assembled 50S subunit and ribosome. The globular domain of the protein is located near the polypeptide exit tunnel on the outside of the subunit, while an extended beta-hairpin is found that lines the wall of the exit tunnel in the center of the 70S ribosome. The sequence is that of Large ribosomal subunit protein uL22 from Cytophaga hutchinsonii (strain ATCC 33406 / DSM 1761 / CIP 103989 / NBRC 15051 / NCIMB 9469 / D465).